The chain runs to 263 residues: Glutathione S-transferase F8, chloroplastic (263 aa).

Residues 1 to 49 (MGAIQARLPLFLSPPSIKHHTFLHSSSSNSNFKIRSNKSSSSSSSSIIM) constitute a chloroplast transit peptide. Residues 50–131 (ASIKVHGVPM…YLAEEYSEKG (82 aa)) enclose the GST N-terminal domain. Glutathione is bound by residues 60–61 (ST), 89–90 (HK), 102–103 (QI), and 115–116 (ES). Residues 139-263 (CKKVKATTNV…WAKVIDLQKQ (125 aa)) form the GST C-terminal domain. Residue T177 is modified to Phosphothreonine.

The protein belongs to the GST superfamily. Phi family. Isoform 1 is predominantly expressed in leaves and isoform 2 in roots.

The protein resides in the plastid. It is found in the chloroplast. It localises to the cytoplasm. Its subcellular location is the cytosol. The catalysed reaction is RX + glutathione = an S-substituted glutathione + a halide anion + H(+). Functionally, in vitro, possesses glutathione S-transferase activity toward 1-chloro-2,4-dinitrobenzene (CDNB) and glutathione peroxidase activity toward cumene hydroperoxide and linoleic acid-13-hydroperoxide. May be involved in the conjugation of reduced glutathione to a wide number of exogenous and endogenous hydrophobic electrophiles and have a detoxification role against certain herbicides. The chain is Glutathione S-transferase F8, chloroplastic (GSTF8) from Arabidopsis thaliana (Mouse-ear cress).